The following is an 880-amino-acid chain: Interference hedgehog (880 aa).

The signal sequence occupies residues 1–20; sequence MTLLTSSLLLFSLLTSRLEA. The Extracellular segment spans residues 21–703; it reads IPVLEKSPAH…ETFNMSPMLT (683 aa). Ig-like C2-type domains lie at 45–142, 132–232, 252–340, and 346–432; these read PGVR…TARL, PLVV…ERIQ, PHLL…YIKV, and PQIV…LQVN. Intrachain disulfides connect Cys-68–Cys-126, Cys-173–Cys-220, Cys-276–Cys-324, and Cys-367–Cys-414. Residues Asn-102 and Asn-209 are each glycosylated (N-linked (GlcNAc...) asparagine). Positions 426 to 467 are disordered; the sequence is GTLLQVNPKQIQEPRESGGTHRPKPNQGSKQKQMYPPTPPNV. Fibronectin type-III domains follow at residues 461–567 and 575–670; these read PPTP…LQPG and VPEL…TQRP. An N-linked (GlcNAc...) asparagine glycan is attached at Asn-466. Heparin-binding residues include Arg-497, Lys-501, Lys-503, and Arg-541. Asn-557 carries an N-linked (GlcNAc...) asparagine glycan. A disordered region spans residues 662 to 697; sequence LKQGRTQRPKTSTTEEPTLQMGDRDTTTPSHNETFN. 2 stretches are compositionally biased toward polar residues: residues 665–678 and 688–697; these read GRTQ…TEEP and TTPSHNETFN. Asn-693 carries N-linked (GlcNAc...) asparagine glycosylation. A helical membrane pass occupies residues 704-724; that stretch reads GTIGGGAVLILLLISTCLCVC. At 725-880 the chain is on the cytoplasmic side; that stretch reads RRRTSRSRGN…SSGSLNSVGV (156 aa). Disordered regions lie at residues 728 to 762 and 775 to 880; these read TSRS…QRQR and QQQQ…SVGV. Composition is skewed to low complexity over residues 823–837 and 864–880; these read RAGG…NNNN and SSRS…SVGV.

It belongs to the immunoglobulin superfamily. IHOG family. As to quaternary structure, homodimer. Heterotetramer; 2 iHog chains bind 2 hh chains when facilitated by heparin, heparin is required to promote high-affinity interactions between hh and iHog.

It localises to the membrane. In terms of biological role, mediates response to the active Hedgehog (Hh) protein signal in embryos, functioning upstream or at the level of patched (ptc). This Drosophila sechellia (Fruit fly) protein is Interference hedgehog.